We begin with the raw amino-acid sequence, 641 residues long: Protein GAMETE EXPRESSED 3 (641 aa).

The first 29 residues, 1–29, serve as a signal peptide directing secretion; the sequence is MVAFRFVYIPLPFFFFFFFFFVFFSGVSQ. The chain crosses the membrane as a helical span at residues 441–461; it reads IIWFLLFEFVIMVLFAALVRF. Positions 570–627 are disordered; sequence ITIFQTPSDESSSEESYRDEHYDDVADDEHDEDDLDRKQKGKLLAHSEGSSNDGDGIA. Basic and acidic residues predominate over residues 584–593; sequence ESYRDEHYDD. Over residues 594–603 the composition is skewed to acidic residues; it reads VADDEHDEDD.

In terms of tissue distribution, expressed in mature siliques and in pollen, mainly in the sperm cells. Detected in the egg cell within the female gametophyte.

Its subcellular location is the cell membrane. Its function is as follows. Required for micropylar pollen tube guidance. Plays a role during early embryo patterning. In Arabidopsis thaliana (Mouse-ear cress), this protein is Protein GAMETE EXPRESSED 3 (GEX3).